The sequence spans 525 residues: Squalene epoxidase 3 (525 aa).

A helical transmembrane segment spans residues 9-29 (HCILTTTFVASLFAFLLLYVL). Residues 64–65 (VA), 84–85 (ER), Arg92, Arg163, Val179, Asp341, and Met354 contribute to the FAD site. 2 helical membrane-spanning segments follow: residues 452-472 (LVLH…VPLP) and 477-497 (LWLG…IIKA).

It belongs to the squalene monooxygenase family. Requires FAD as cofactor. Expressed in seedlings, leaves, stems, inflorescences and siliques.

Its subcellular location is the membrane. It catalyses the reaction squalene + reduced [NADPH--hemoprotein reductase] + O2 = (S)-2,3-epoxysqualene + oxidized [NADPH--hemoprotein reductase] + H2O + H(+). The protein operates within terpene metabolism; lanosterol biosynthesis; lanosterol from farnesyl diphosphate: step 2/3. Catalyzes the stereospecific oxidation of squalene to (S)-2,3-epoxysqualene, and is considered to be a rate-limiting enzyme in steroid biosynthesis. Can produce not only oxidosqualene, but also 2,3:22,23-dioxidosqualene. The polypeptide is Squalene epoxidase 3 (SQE3) (Arabidopsis thaliana (Mouse-ear cress)).